A 468-amino-acid polypeptide reads, in one-letter code: Aldehyde dehydrogenase family 3 member B1 (468 aa).

N-acetylmethionine is present on Met1. 188–193 is a binding site for NAD(+); it reads GNPQVG. Active-site residues include Glu210 and Cys244. Residue Cys463 is the site of S-palmitoyl cysteine attachment. Cys465 carries the post-translational modification Cysteine methyl ester. Cys465 is lipidated: S-geranylgeranyl cysteine. Residues 466-468 constitute a propeptide, removed in mature form; it reads TLL.

The protein belongs to the aldehyde dehydrogenase family. In terms of processing, dually lipidated in the C-terminus; prenylation occurs prior to, and is a prerequisite for palmitoylation. It is also required for activity towards long-chain substrates.

It localises to the cell membrane. The catalysed reaction is an aldehyde + NAD(+) + H2O = a carboxylate + NADH + 2 H(+). The enzyme catalyses a long-chain fatty aldehyde + NAD(+) + H2O = a long-chain fatty acid + NADH + 2 H(+). It carries out the reaction a medium-chain fatty aldehyde + NAD(+) + H2O = a medium-chain fatty acid + NADH + 2 H(+). It catalyses the reaction octanal + NAD(+) + H2O = octanoate + NADH + 2 H(+). The catalysed reaction is nonanal + NAD(+) + H2O = nonanoate + NADH + 2 H(+). The enzyme catalyses hexadecanoate + NADH + 2 H(+) = hexadecanal + NAD(+) + H2O. It carries out the reaction (2E)-octenal + NAD(+) + H2O = (2E)-octenoate + NADH + 2 H(+). It catalyses the reaction (E)-non-2-enal + NAD(+) + H2O = (E)-non-2-enoate + NADH + 2 H(+). The catalysed reaction is (E)-4-hydroxynon-2-enal + NAD(+) + H2O = (E)-4-hydroxynon-2-enoate + NADH + 2 H(+). The enzyme catalyses (2E)-hexadecenal + NAD(+) + H2O = (E)-hexadec-2-enoate + NADH + 2 H(+). It carries out the reaction benzaldehyde + NAD(+) + H2O = benzoate + NADH + 2 H(+). It catalyses the reaction an aldehyde + NADP(+) + H2O = a carboxylate + NADPH + 2 H(+). The catalysed reaction is a medium-chain fatty aldehyde + NADP(+) + H2O = a medium-chain fatty acid + NADPH + 2 H(+). The enzyme catalyses hexanal + NADP(+) + H2O = hexanoate + NADPH + 2 H(+). It carries out the reaction octanal + NADP(+) + H2O = octanoate + NADPH + 2 H(+). It catalyses the reaction nonanal + NADP(+) + H2O = nonanoate + NADPH + 2 H(+). The catalysed reaction is (2E)-octenal + NADP(+) + H2O = (2E)-octenoate + NADPH + 2 H(+). The enzyme catalyses (E)-non-2-enal + NADP(+) + H2O = (E)-non-2-enoate + NADPH + 2 H(+). It carries out the reaction (E)-4-hydroxynon-2-enal + NADP(+) + H2O = (E)-4-hydroxynon-2-enoate + NADPH + 2 H(+). It catalyses the reaction benzaldehyde + NADP(+) + H2O = benzoate + NADPH + 2 H(+). It participates in alcohol metabolism; ethanol degradation; acetate from ethanol: step 2/2. Oxidizes medium and long chain saturated and unsaturated fatty aldehydes generated in the plasma membrane into non-toxic fatty acids. May have a protective role against the cytotoxicity induced by lipid peroxidation. Short-chain fatty aldehydes are not good substrates. Can use both NADP(+) and NAD(+) as electron acceptor in vitro, however in vivo preference will depend on their tissue levels. Low activity towards acetaldehyde and 3,4-dihydroxyphenylacetaldehyde. Able to metabolize aromatic aldehydes such as benzaldehyde to their acid form. The polypeptide is Aldehyde dehydrogenase family 3 member B1 (ALDH3B1) (Bos taurus (Bovine)).